Here is a 255-residue protein sequence, read N- to C-terminus: Putative oxidoreductase YtkK (255 aa).

Residue 7–14 (TAGSKGLG) participates in NAD(+) binding.

It belongs to the short-chain dehydrogenases/reductases (SDR) family.

In Bacillus subtilis (strain 168), this protein is Putative oxidoreductase YtkK (ytkK).